The primary structure comprises 166 residues: Putative transmembrane protein encoded by LINC00477 (166 aa).

Asn7 carries N-linked (GlcNAc...) asparagine glycosylation. The next 3 helical transmembrane spans lie at 15 to 35, 41 to 61, and 63 to 83; these read VSSF…FFLC, MTGC…VLGP, and PMGM…RFLG. The interval 127–166 is disordered; that stretch reads LPVPHPPSPLSKCPQHPRPRRTKGPGLRKLWGPGPPFFPS.

Its subcellular location is the membrane. The sequence is that of Putative transmembrane protein encoded by LINC00477 (LINC00477) from Homo sapiens (Human).